The primary structure comprises 79 residues: DNA-directed RNA polymerase subunit omega (79 aa).

This sequence belongs to the RNA polymerase subunit omega family. In cyanobacteria the RNAP catalytic core is composed of 2 alpha, 1 beta, 1 beta', 1 gamma and 1 omega subunit. When a sigma factor is associated with the core the holoenzyme is formed, which can initiate transcription.

The enzyme catalyses RNA(n) + a ribonucleoside 5'-triphosphate = RNA(n+1) + diphosphate. Promotes RNA polymerase assembly. Latches the N- and C-terminal regions of the beta' subunit thereby facilitating its interaction with the beta and alpha subunits. The polypeptide is DNA-directed RNA polymerase subunit omega (Synechococcus sp. (strain JA-2-3B'a(2-13)) (Cyanobacteria bacterium Yellowstone B-Prime)).